We begin with the raw amino-acid sequence, 189 residues long: Apolipoprotein D (189 aa).

The N-terminal stretch at 1-20 (MVPVLLLLPALAGLFGAAEG) is a signal peptide. A Pyrrolidone carboxylic acid modification is found at Gln-21. Cystine bridges form between Cys-28–Cys-134 and Cys-61–Cys-185. N-linked (GlcNAc...) asparagine glycans are attached at residues Asn-65 and Asn-98.

This sequence belongs to the calycin superfamily. Lipocalin family. In terms of assembly, homodimer.

Its subcellular location is the secreted. APOD occurs in the macromolecular complex with lecithin-transport and binding of bilin. Appears to be able to transport a variety of ligands in a number of different contexts. This is Apolipoprotein D (APOD) from Bos taurus (Bovine).